The primary structure comprises 875 residues: Alanine--tRNA ligase (875 aa).

Residues His-563, His-567, Cys-665, and His-669 each coordinate Zn(2+).

It belongs to the class-II aminoacyl-tRNA synthetase family. Zn(2+) is required as a cofactor.

Its subcellular location is the cytoplasm. It catalyses the reaction tRNA(Ala) + L-alanine + ATP = L-alanyl-tRNA(Ala) + AMP + diphosphate. Its function is as follows. Catalyzes the attachment of alanine to tRNA(Ala) in a two-step reaction: alanine is first activated by ATP to form Ala-AMP and then transferred to the acceptor end of tRNA(Ala). Also edits incorrectly charged Ser-tRNA(Ala) and Gly-tRNA(Ala) via its editing domain. This is Alanine--tRNA ligase from Shewanella pealeana (strain ATCC 700345 / ANG-SQ1).